Consider the following 198-residue polypeptide: MRAFVVRARAAPVDSQQFLAAIGHEAHTEILAHTLMNTIFVAQSHRDDVVVYLVLESTQDFSRTICFRSNELGHIGGFHEQNLTNKIAKALTVSKGMAKEQLREVEAGITVRTVSFEKLIQELAEDYQLYMLEKKGTPVRDIEFAANPCFLLTDHIPMPKKSFNSLKRLGTQHINLGPKMLFASQCVVLIHNELDMRL.

2 residues coordinate S-adenosyl-L-methionine: leucine 132 and cysteine 186.

It belongs to the methyltransferase superfamily. TrmY family.

The protein localises to the cytoplasm. In Shewanella frigidimarina (strain NCIMB 400), this protein is Putative pseudouridine methyltransferase.